The following is a 147-amino-acid chain: uncharacterized protein (147 aa).

The interval 29-147 (PYGNNSVHQG…GHHHGHHHKH (119 aa)) is disordered. Polar residues-rich tracts occupy residues 34-45 (SVHQGQPHTDQN) and 60-73 (PQAQ…NQPS). Gly residues predominate over residues 75-92 (PFGGAGYTGPTAGTGFGN). A compositionally biased stretch (basic residues) spans 122-147 (DGHHKKHGRKEHDHHHGHHHGHHHKH).

This is an uncharacterized protein from Caenorhabditis elegans.